Reading from the N-terminus, the 156-residue chain is Small ribosomal subunit protein uS7 (156 aa).

It belongs to the universal ribosomal protein uS7 family. Part of the 30S ribosomal subunit. Contacts proteins S9 and S11.

Its function is as follows. One of the primary rRNA binding proteins, it binds directly to 16S rRNA where it nucleates assembly of the head domain of the 30S subunit. Is located at the subunit interface close to the decoding center, probably blocks exit of the E-site tRNA. This is Small ribosomal subunit protein uS7 from Onion yellows phytoplasma (strain OY-M).